The sequence spans 712 residues: Polyribonucleotide nucleotidyltransferase (712 aa).

The Mg(2+) site is built by Asp487 and Asp493. The KH domain occupies 554–613 (PRIEVMNIPVDKIREVIGSGGKVIREIVEKTGAKINIEDDGTVKIASSSGKEIEAARKWI). The S1 motif domain maps to 623 to 691 (GQIYEGTVVK…ERGKVRLSMK (69 aa)).

It belongs to the polyribonucleotide nucleotidyltransferase family. It depends on Mg(2+) as a cofactor.

Its subcellular location is the cytoplasm. The enzyme catalyses RNA(n+1) + phosphate = RNA(n) + a ribonucleoside 5'-diphosphate. Involved in mRNA degradation. Catalyzes the phosphorolysis of single-stranded polyribonucleotides processively in the 3'- to 5'-direction. The polypeptide is Polyribonucleotide nucleotidyltransferase (Rhizobium leguminosarum bv. trifolii (strain WSM2304)).